The sequence spans 570 residues: Transmembrane 7 superfamily member 3 (570 aa).

The signal sequence occupies residues 1-21; sequence MGFLQLLVVAVLASEHRVAGA. Asn27, Asn61, Asn75, Asn87, and Asn264 each carry an N-linked (GlcNAc...) asparagine glycan. Transmembrane regions (helical) follow at residues 296–313, 320–342, 347–369, 371–393, 408–430, 437–459, and 479–501; these read VFFT…FFGH, LFFI…LTPI, NLIL…WWRF, ILSI…VTFF, FWVT…LRIL, VIGS…SYIT, and PFQT…GITL.

Widely expressed. Highly expressed in kidney and pancreas.

It is found in the cell membrane. Its function is as follows. Involved in the inhibition of cytokine-induced death of pancreatic beta cells. Involved in the promotion of insulin secretion from pancreatic beta cells. Is a downstream transcriptional target of p53/TP53, and acts as a pro-survival homeostatic factor that attenuates the development of cellular stress. Maintains protein homeostasis and promotes cell survival through attenuation of endoplasmic reticulum (ER) stress and the subsequent induction of unfolded protein response (UPR). This chain is Transmembrane 7 superfamily member 3 (TM7SF3), found in Homo sapiens (Human).